Here is a 153-residue protein sequence, read N- to C-terminus: Fimbrial protein EcpC (153 aa).

The propeptide at 1–8 (MLKQVQKG) is leader sequence. The residue at position 9 (F9) is an N-methylphenylalanine. The chain crosses the membrane as a helical span at residues 9 to 29 (FTLIELMIVIAIIGILAAIAL). A disulfide bridge connects residues C130 and C143.

The protein belongs to the N-Me-Phe pilin family.

It is found in the fimbrium. The protein resides in the membrane. This chain is Fimbrial protein EcpC (ecpC), found in Eikenella corrodens.